The sequence spans 150 residues: 3-dehydroquinate dehydratase (150 aa).

Catalysis depends on tyrosine 26, which acts as the Proton acceptor. Asparagine 77, histidine 83, and aspartate 90 together coordinate substrate. Histidine 103 functions as the Proton donor in the catalytic mechanism. Substrate-binding positions include 104 to 105 (LS) and arginine 114.

Belongs to the type-II 3-dehydroquinase family. As to quaternary structure, homododecamer.

It catalyses the reaction 3-dehydroquinate = 3-dehydroshikimate + H2O. It functions in the pathway metabolic intermediate biosynthesis; chorismate biosynthesis; chorismate from D-erythrose 4-phosphate and phosphoenolpyruvate: step 3/7. Catalyzes a trans-dehydration via an enolate intermediate. The polypeptide is 3-dehydroquinate dehydratase (Mannheimia succiniciproducens (strain KCTC 0769BP / MBEL55E)).